Consider the following 282-residue polypeptide: Urease accessory protein UreD (282 aa).

It belongs to the UreD family. As to quaternary structure, ureD, UreF and UreG form a complex that acts as a GTP-hydrolysis-dependent molecular chaperone, activating the urease apoprotein by helping to assemble the nickel containing metallocenter of UreC. The UreE protein probably delivers the nickel.

It is found in the cytoplasm. Functionally, required for maturation of urease via the functional incorporation of the urease nickel metallocenter. This Methylobacterium sp. (strain 4-46) protein is Urease accessory protein UreD.